Reading from the N-terminus, the 207-residue chain is dITP/XTP pyrophosphatase (207 aa).

11–16 (TGNPGK) contacts substrate. Asp72 acts as the Proton acceptor in catalysis. Asp72 serves as a coordination point for Mg(2+). Residues Ser73, 154 to 157 (FGYD), Lys177, and 182 to 183 (HR) contribute to the substrate site.

It belongs to the HAM1 NTPase family. Homodimer. Mg(2+) is required as a cofactor.

It catalyses the reaction XTP + H2O = XMP + diphosphate + H(+). It carries out the reaction dITP + H2O = dIMP + diphosphate + H(+). The catalysed reaction is ITP + H2O = IMP + diphosphate + H(+). Pyrophosphatase that catalyzes the hydrolysis of nucleoside triphosphates to their monophosphate derivatives, with a high preference for the non-canonical purine nucleotides XTP (xanthosine triphosphate), dITP (deoxyinosine triphosphate) and ITP. Seems to function as a house-cleaning enzyme that removes non-canonical purine nucleotides from the nucleotide pool, thus preventing their incorporation into DNA/RNA and avoiding chromosomal lesions. The polypeptide is dITP/XTP pyrophosphatase (Thermus thermophilus (strain ATCC BAA-163 / DSM 7039 / HB27)).